A 211-amino-acid chain; its full sequence is Uracil phosphoribosyltransferase (211 aa).

Residues Arg78, Arg103, and 130-138 each bind 5-phospho-alpha-D-ribose 1-diphosphate; that span reads DPMLATGGT. Uracil contacts are provided by residues Ile195 and 200-202; that span reads GDA. Residue Asp201 coordinates 5-phospho-alpha-D-ribose 1-diphosphate.

Belongs to the UPRTase family. Mg(2+) is required as a cofactor.

The enzyme catalyses UMP + diphosphate = 5-phospho-alpha-D-ribose 1-diphosphate + uracil. It functions in the pathway pyrimidine metabolism; UMP biosynthesis via salvage pathway; UMP from uracil: step 1/1. With respect to regulation, allosterically activated by GTP. Functionally, catalyzes the conversion of uracil and 5-phospho-alpha-D-ribose 1-diphosphate (PRPP) to UMP and diphosphate. This is Uracil phosphoribosyltransferase from Kocuria rhizophila (strain ATCC 9341 / DSM 348 / NBRC 103217 / DC2201).